The primary structure comprises 445 residues: RCC1 domain-containing protein RUG3, mitochondrial (445 aa).

A mitochondrion-targeting transit peptide spans 1 to 22 (MAALSHRLRSFTRRFSSTRTTQ). RCC1 repeat units follow at residues 47–101 (TLQL…DSSS), 118–169 (DGDL…ALTH), 171–221 (GDVF…AITE), 222–279 (SGEL…ALTK), 280–331 (EGQL…ALTE), 333–383 (GKVL…AITD), and 385–442 (GELW…CLVS).

Interacts with ATM. Mostly expressed in roots and rosette leaves of young seedlings, and, to a lower extent, in the flowers and siliques of mature plants. Preferentially expressed in the vascular tissues.

It is found in the mitochondrion. Functionally, regulates DNA damage response (DDR) synergistically with ATM. Together with ATM, involved in the splicing of the ND2/NAD2 mRNA. Required for the accumulation of mitochondrial respiratory chain complex I. Negative regulator of plant responses to abscisic acid (ABA). May have a pivotal role in vegetative growth and the phase transition from vegetative to reproductive growth. The chain is RCC1 domain-containing protein RUG3, mitochondrial from Arabidopsis thaliana (Mouse-ear cress).